Consider the following 378-residue polypeptide: Anhydro-N-acetylmuramic acid kinase (378 aa).

9 to 16 (GTSADGID) lines the ATP pocket.

Belongs to the anhydro-N-acetylmuramic acid kinase family.

The enzyme catalyses 1,6-anhydro-N-acetyl-beta-muramate + ATP + H2O = N-acetyl-D-muramate 6-phosphate + ADP + H(+). It functions in the pathway amino-sugar metabolism; 1,6-anhydro-N-acetylmuramate degradation. It participates in cell wall biogenesis; peptidoglycan recycling. In terms of biological role, catalyzes the specific phosphorylation of 1,6-anhydro-N-acetylmuramic acid (anhMurNAc) with the simultaneous cleavage of the 1,6-anhydro ring, generating MurNAc-6-P. Is required for the utilization of anhMurNAc either imported from the medium or derived from its own cell wall murein, and thus plays a role in cell wall recycling. The chain is Anhydro-N-acetylmuramic acid kinase from Synechococcus elongatus (strain ATCC 33912 / PCC 7942 / FACHB-805) (Anacystis nidulans R2).